The following is a 609-amino-acid chain: D-apionate lactonase (609 aa).

The catalysed reaction is D-apionolactone + H2O = D-apionate + H(+). It functions in the pathway carbohydrate metabolism. Involved in catabolism of D-apiose. Hydrolyzes D-apionolactone to D-apionate. The chain is D-apionate lactonase from Brucella anthropi (strain ATCC 49188 / DSM 6882 / CCUG 24695 / JCM 21032 / LMG 3331 / NBRC 15819 / NCTC 12168 / Alc 37) (Ochrobactrum anthropi).